Consider the following 245-residue polypeptide: rRNA adenine N-6-methyltransferase (245 aa).

The S-adenosyl-L-methionine site is built by Asn-10, Leu-12, Gly-37, Glu-58, Asp-83, and Asn-100.

This sequence belongs to the class I-like SAM-binding methyltransferase superfamily. rRNA adenine N(6)-methyltransferase family.

The catalysed reaction is adenosine(2085) in 23S rRNA + 2 S-adenosyl-L-methionine = N(6)-dimethyladenosine(2085) in 23S rRNA + 2 S-adenosyl-L-homocysteine + 2 H(+). Its function is as follows. This protein produces a dimethylation of the adenine residue at position 2085 in 23S rRNA, resulting in reduced affinity between ribosomes and macrolide-lincosamide-streptogramin B antibiotics. This is rRNA adenine N-6-methyltransferase (ermB) from Enterococcus faecalis (strain ATCC 700802 / V583).